The following is a 557-amino-acid chain: Probable asparagine synthetase [glutamine-hydrolyzing] (557 aa).

C2 serves as the catalytic For GATase activity. A Glutamine amidotransferase type-2 domain is found at 2–188 (CGILAILNSL…PGHYFSSKTK (187 aa)). L-glutamine-binding positions include 50 to 54 (RLAIV), 75 to 77 (NGE), and D101. The 250-residue stretch at 217–466 (AIKEAFEQAV…LPSSVLWRQK (250 aa)) folds into the Asparagine synthetase domain. Residues L239, I279, and 353 to 354 (SG) contribute to the ATP site. Residues 538–557 (WGASQDPSGRAQKVHLSTTE) form a disordered region.

The catalysed reaction is L-aspartate + L-glutamine + ATP + H2O = L-asparagine + L-glutamate + AMP + diphosphate + H(+). The protein operates within amino-acid biosynthesis; L-asparagine biosynthesis; L-asparagine from L-aspartate (L-Gln route): step 1/1. The protein is Probable asparagine synthetase [glutamine-hydrolyzing] (asns) of Dictyostelium discoideum (Social amoeba).